The primary structure comprises 396 residues: Acetylornithine aminotransferase 2 (396 aa).

Pyridoxal 5'-phosphate-binding positions include 102–103 (GA) and F134. N(2)-acetyl-L-ornithine is bound at residue R137. Residue 219 to 222 (DEVQ) participates in pyridoxal 5'-phosphate binding. N6-(pyridoxal phosphate)lysine is present on K248. T276 contributes to the pyridoxal 5'-phosphate binding site.

Belongs to the class-III pyridoxal-phosphate-dependent aminotransferase family. ArgD subfamily. In terms of assembly, homodimer. Pyridoxal 5'-phosphate serves as cofactor.

Its subcellular location is the cytoplasm. The catalysed reaction is N(2)-acetyl-L-ornithine + 2-oxoglutarate = N-acetyl-L-glutamate 5-semialdehyde + L-glutamate. Its pathway is amino-acid biosynthesis; L-arginine biosynthesis; N(2)-acetyl-L-ornithine from L-glutamate: step 4/4. This is Acetylornithine aminotransferase 2 from Bordetella bronchiseptica (strain ATCC BAA-588 / NCTC 13252 / RB50) (Alcaligenes bronchisepticus).